Here is a 634-residue protein sequence, read N- to C-terminus: DNA-directed RNA polymerase subunit gamma (634 aa).

Zn(2+) is bound by residues Cys74, Cys76, Cys89, and Cys92. Mg(2+) contacts are provided by Asp471, Asp473, and Asp475.

It belongs to the RNA polymerase beta' chain family. RpoC1 subfamily. In terms of assembly, in cyanobacteria the RNAP catalytic core is composed of 2 alpha, 1 beta, 1 beta', 1 gamma and 1 omega subunit. When a sigma factor is associated with the core the holoenzyme is formed, which can initiate transcription. It depends on Mg(2+) as a cofactor. Requires Zn(2+) as cofactor.

It catalyses the reaction RNA(n) + a ribonucleoside 5'-triphosphate = RNA(n+1) + diphosphate. Its function is as follows. DNA-dependent RNA polymerase catalyzes the transcription of DNA into RNA using the four ribonucleoside triphosphates as substrates. This chain is DNA-directed RNA polymerase subunit gamma, found in Prochlorococcus marinus (strain MIT 9215).